A 121-amino-acid chain; its full sequence is Large ribosomal subunit protein bL12 (121 aa).

This sequence belongs to the bacterial ribosomal protein bL12 family. As to quaternary structure, homodimer. Part of the ribosomal stalk of the 50S ribosomal subunit. Forms a multimeric L10(L12)X complex, where L10 forms an elongated spine to which 2 to 4 L12 dimers bind in a sequential fashion. Binds GTP-bound translation factors.

Functionally, forms part of the ribosomal stalk which helps the ribosome interact with GTP-bound translation factors. Is thus essential for accurate translation. This chain is Large ribosomal subunit protein bL12, found in Macrococcus caseolyticus (strain JCSC5402) (Macrococcoides caseolyticum).